Reading from the N-terminus, the 241-residue chain is 1-(5-phosphoribosyl)-5-[(5-phosphoribosylamino)methylideneamino] imidazole-4-carboxamide isomerase (241 aa).

The active-site Proton acceptor is the D8. D130 acts as the Proton donor in catalysis.

It belongs to the HisA/HisF family.

It is found in the cytoplasm. It carries out the reaction 1-(5-phospho-beta-D-ribosyl)-5-[(5-phospho-beta-D-ribosylamino)methylideneamino]imidazole-4-carboxamide = 5-[(5-phospho-1-deoxy-D-ribulos-1-ylimino)methylamino]-1-(5-phospho-beta-D-ribosyl)imidazole-4-carboxamide. Its pathway is amino-acid biosynthesis; L-histidine biosynthesis; L-histidine from 5-phospho-alpha-D-ribose 1-diphosphate: step 4/9. The polypeptide is 1-(5-phosphoribosyl)-5-[(5-phosphoribosylamino)methylideneamino] imidazole-4-carboxamide isomerase (Leptospira interrogans serogroup Icterohaemorrhagiae serovar copenhageni (strain Fiocruz L1-130)).